Consider the following 87-residue polypeptide: U14-lycotoxin-Ls1c (87 aa).

Positions methionine 1 to serine 20 are cleaved as a signal peptide. The region spanning glutamate 21–serine 66 is the WAP domain. Cystine bridges form between cysteine 24/cysteine 54, cysteine 32/cysteine 58, cysteine 41/cysteine 53, cysteine 42/cysteine 80, and cysteine 47/cysteine 62.

It belongs to the venom protein 11 family. 01 (wap-1) subfamily. Contains 5 disulfide bonds. In terms of tissue distribution, expressed by the venom gland.

It is found in the secreted. Has antibacterial activity. The chain is U14-lycotoxin-Ls1c from Lycosa singoriensis (Wolf spider).